Consider the following 94-residue polypeptide: Large ribosomal subunit protein eL33 (94 aa).

The protein belongs to the eukaryotic ribosomal protein eL33 family.

The polypeptide is Large ribosomal subunit protein eL33 (Aeropyrum pernix (strain ATCC 700893 / DSM 11879 / JCM 9820 / NBRC 100138 / K1)).